Reading from the N-terminus, the 819-residue chain is Leucine--tRNA ligase (819 aa).

The 'HIGH' region motif lies at 40–51 (PYPSGAGLHVGH). Positions 600–604 (KMSKS) match the 'KMSKS' region motif. Lys-603 serves as a coordination point for ATP.

The protein belongs to the class-I aminoacyl-tRNA synthetase family.

The protein resides in the cytoplasm. The catalysed reaction is tRNA(Leu) + L-leucine + ATP = L-leucyl-tRNA(Leu) + AMP + diphosphate. This is Leucine--tRNA ligase from Chlamydia trachomatis serovar A (strain ATCC VR-571B / DSM 19440 / HAR-13).